The primary structure comprises 240 residues: Membrane-spanning 4-domains subfamily A member 15 (240 aa).

4 helical membrane passes run 73 to 93 (VLGT…SVLL), 100 to 120 (VGIF…FIIS), 144 to 164 (ILSV…FGVT), and 173 to 193 (LAVL…AMHF).

It belongs to the MS4A family.

It localises to the membrane. Functionally, may be involved in signal transduction as a component of a multimeric receptor complex. This chain is Membrane-spanning 4-domains subfamily A member 15 (MS4A15), found in Homo sapiens (Human).